Here is a 390-residue protein sequence, read N- to C-terminus: O-phospho-L-seryl-tRNA:Cys-tRNA synthase 2 (390 aa).

Pyridoxal 5'-phosphate is bound by residues 83 to 84 (AR), Asn187, and 210 to 212 (SGH). Residue Lys213 is modified to N6-(pyridoxal phosphate)lysine.

The protein belongs to the SepCysS family. As to quaternary structure, homodimer. Interacts with SepRS. Pyridoxal 5'-phosphate is required as a cofactor.

It carries out the reaction O-phospho-L-seryl-tRNA(Cys) + hydrogen sulfide + H(+) = L-cysteinyl-tRNA(Cys) + phosphate. Functionally, converts O-phospho-L-seryl-tRNA(Cys) (Sep-tRNA(Cys)) to L-cysteinyl-tRNA(Cys) (Cys-tRNA(Cys)). The protein is O-phospho-L-seryl-tRNA:Cys-tRNA synthase 2 of Archaeoglobus fulgidus (strain ATCC 49558 / DSM 4304 / JCM 9628 / NBRC 100126 / VC-16).